The following is a 178-amino-acid chain: Large ribosomal subunit protein uL6 (178 aa).

The protein belongs to the universal ribosomal protein uL6 family. Part of the 50S ribosomal subunit.

Functionally, this protein binds to the 23S rRNA, and is important in its secondary structure. It is located near the subunit interface in the base of the L7/L12 stalk, and near the tRNA binding site of the peptidyltransferase center. The sequence is that of Large ribosomal subunit protein uL6 from Corynebacterium glutamicum (strain R).